A 151-amino-acid chain; its full sequence is Large ribosomal subunit protein uL22 (151 aa).

A disordered region spans residues 1 to 25 (MARINYSVKEDPETTSKAMGSELHI).

It belongs to the universal ribosomal protein uL22 family. In terms of assembly, part of the 50S ribosomal subunit.

In terms of biological role, this protein binds specifically to 23S rRNA. It makes multiple contacts with different domains of the 23S rRNA in the assembled 50S subunit and ribosome. Functionally, the globular domain of the protein is located near the polypeptide exit tunnel on the outside of the subunit, while an extended beta-hairpin is found that lines the wall of the exit tunnel in the center of the 70S ribosome. This Methanosarcina barkeri (strain Fusaro / DSM 804) protein is Large ribosomal subunit protein uL22.